The sequence spans 162 residues: Peptide deformylase (162 aa).

Cys-91 and His-133 together coordinate Fe cation. The active site involves Glu-134. His-137 contacts Fe cation.

It belongs to the polypeptide deformylase family. The cofactor is Fe(2+).

The catalysed reaction is N-terminal N-formyl-L-methionyl-[peptide] + H2O = N-terminal L-methionyl-[peptide] + formate. In terms of biological role, removes the formyl group from the N-terminal Met of newly synthesized proteins. Requires at least a dipeptide for an efficient rate of reaction. N-terminal L-methionine is a prerequisite for activity but the enzyme has broad specificity at other positions. In Finegoldia magna (strain ATCC 29328 / DSM 20472 / WAL 2508) (Peptostreptococcus magnus), this protein is Peptide deformylase.